The sequence spans 59 residues: Ribosome biogenesis protein Nop10 (59 aa).

The protein belongs to the NOP10 family.

Its function is as follows. Involved in ribosome biogenesis; more specifically in 18S rRNA pseudouridylation and in cleavage of pre-rRNA. The sequence is that of Ribosome biogenesis protein Nop10 from Thermococcus gammatolerans (strain DSM 15229 / JCM 11827 / EJ3).